The primary structure comprises 656 residues: Nuclear pore complex protein Nup85 (656 aa).

The residue at position 1 (Met1) is an N-acetylmethionine. At Lys92 the chain carries N6-acetyllysine. A Phosphoserine modification is found at Ser223.

The protein belongs to the nucleoporin Nup85 family. As to quaternary structure, component of the nuclear pore complex (NPC). Component of the NPC Nup107-160 subcomplex, consisting of at least NUP107, NUP98/Nup96, NUP160, NUP133, NUP85, NUP37, NUP43 and SEC13. Interacts with NUP160, NUP133 and SEC13. Interacts with NUP37, NUP107 and NUP43. Interacts with CCR2.

The protein localises to the nucleus. The protein resides in the nuclear pore complex. It is found in the chromosome. Its subcellular location is the centromere. It localises to the kinetochore. The protein localises to the cytoplasm. The protein resides in the cytoskeleton. It is found in the spindle. Its subcellular location is the nucleus membrane. Essential component of the nuclear pore complex (NPC) that seems to be required for NPC assembly and maintenance. As part of the NPC Nup107-160 subcomplex plays a role in RNA export and in tethering NUP96/Nup98 and NUP153 to the nucleus. The Nup107-160 complex seems to be required for spindle assembly during mitosis. NUP85 is required for membrane clustering of CCL2-activated CCR2. Seems to be involved in CCR2-mediated chemotaxis of monocytes and may link activated CCR2 to the phosphatidyl-inositol 3-kinase-Rac-lammellipodium protrusion cascade. Involved in nephrogenesis. This Homo sapiens (Human) protein is Nuclear pore complex protein Nup85 (NUP85).